Here is a 206-residue protein sequence, read N- to C-terminus: Probable metallo-hydrolase MJ0888 (206 aa).

Zn(2+) contacts are provided by H55, H57, D59, H60, H130, D147, and H190.

This sequence belongs to the metallo-beta-lactamase superfamily. Zn(2+) is required as a cofactor.

The chain is Probable metallo-hydrolase MJ0888 from Methanocaldococcus jannaschii (strain ATCC 43067 / DSM 2661 / JAL-1 / JCM 10045 / NBRC 100440) (Methanococcus jannaschii).